Here is a 212-residue protein sequence, read N- to C-terminus: GTP-binding protein EngB (212 aa).

Residues 36–212 (TAPEVAFAGR…LRAAVYDAII (177 aa)) enclose the EngB-type G domain. GTP-binding positions include 44–51 (GRSNVGKS), 71–75 (GRTQE), 91–94 (DMPG), 158–161 (TKSD), and 192–194 (TSS). Positions 51 and 73 each coordinate Mg(2+).

The protein belongs to the TRAFAC class TrmE-Era-EngA-EngB-Septin-like GTPase superfamily. EngB GTPase family. The cofactor is Mg(2+).

Necessary for normal cell division and for the maintenance of normal septation. This is GTP-binding protein EngB from Zymomonas mobilis subsp. mobilis (strain ATCC 31821 / ZM4 / CP4).